We begin with the raw amino-acid sequence, 528 residues long: RNA polymerase sigma factor SigA (528 aa).

The segment covering 1-10 (MAATKASTAT) has biased composition (polar residues). Residues 1-211 (MAATKASTAT…FVWDEDESEA (211 aa)) are disordered. Composition is skewed to low complexity over residues 19–31 (TKSPAASASGAKT), 38–56 (AKSASGSPPAKRATKPAAR), and 80–92 (AAKSAAAKAPSAR). Residues 100–109 (APKDAQHEAA) are compositionally biased toward basic and acidic residues. Positions 110 to 173 (TDPEDALDSV…DDEDHEDLEA (64 aa)) are enriched in acidic residues. The tract at residues 295 to 365 (LLEANLRLVV…TRAMADQART (71 aa)) is sigma-70 factor domain-2. Residues 319-322 (DLIQ) carry the Interaction with polymerase core subunit RpoC motif. The tract at residues 374–450 (EVINKLGRIQ…DSEAVVAVDA (77 aa)) is sigma-70 factor domain-3. The segment at 463-516 (VLDTLSEREAGVVRLRFGLTDGQPRTLDEIGQVYGVTRERIRQIESKTMSKLRH) is sigma-70 factor domain-4. The segment at residues 489 to 508 (LDEIGQVYGVTRERIRQIES) is a DNA-binding region (H-T-H motif).

This sequence belongs to the sigma-70 factor family. RpoD/SigA subfamily. Interacts transiently with the RNA polymerase catalytic core.

Its subcellular location is the cytoplasm. In terms of biological role, sigma factors are initiation factors that promote the attachment of RNA polymerase to specific initiation sites and are then released. This sigma factor is the primary sigma factor during exponential growth. The protein is RNA polymerase sigma factor SigA of Mycobacterium bovis (strain ATCC BAA-935 / AF2122/97).